Consider the following 459-residue polypeptide: tRNA-guanine(15) transglycosylase (459 aa).

The active-site Nucleophile is Asp90. Substrate is bound by residues Asp125 and Gly192. Residues Cys275, Cys277, and Cys280 each contribute to the Zn(2+) site.

The protein belongs to the archaeosine tRNA-ribosyltransferase family. Zn(2+) is required as a cofactor.

The enzyme catalyses guanosine(15) in tRNA + 7-cyano-7-deazaguanine = 7-cyano-7-carbaguanosine(15) in tRNA + guanine. It functions in the pathway tRNA modification; archaeosine-tRNA biosynthesis. Its function is as follows. Exchanges the guanine residue with 7-cyano-7-deazaguanine (preQ0) at position 15 in the dihydrouridine loop (D-loop) of archaeal tRNAs. In Methanopyrus kandleri (strain AV19 / DSM 6324 / JCM 9639 / NBRC 100938), this protein is tRNA-guanine(15) transglycosylase.